Consider the following 197-residue polypeptide: LexA repressor (197 aa).

Positions 28-47 (VREIARRFRITPRGALLHLI) form a DNA-binding region, H-T-H motif. Active-site for autocatalytic cleavage activity residues include Ser119 and Lys156.

Belongs to the peptidase S24 family. In terms of assembly, homodimer.

The catalysed reaction is Hydrolysis of Ala-|-Gly bond in repressor LexA.. In terms of biological role, represses a number of genes involved in the response to DNA damage (SOS response), including recA and lexA. In the presence of single-stranded DNA, RecA interacts with LexA causing an autocatalytic cleavage which disrupts the DNA-binding part of LexA, leading to derepression of the SOS regulon and eventually DNA repair. This chain is LexA repressor, found in Thermotoga maritima (strain ATCC 43589 / DSM 3109 / JCM 10099 / NBRC 100826 / MSB8).